The primary structure comprises 244 residues: MRFDIVTLFPDCFTSVLSSGLLGKALAKQIAQVNLVNPRDFTTDKHRKVDDEPYGGGVGMLMKPEPIFSAVESLPILERREVILMSPQGQTIDQPLLRELVSNYEQLVVICGHYEGVDDRVLHLVTREVSLGDFILTGGEIPAMALINGVVRLLPGTVAKTESLTAESFEEGLLDYPQYTRPANFRGWKVPDVLLSGNHAAISQWRYEQQIKRTSDRRPDLLEKWQQEKKPGSREQGSREQGEK.

Residues glycine 112 and 131–136 (LGDFIL) each bind S-adenosyl-L-methionine. The disordered stretch occupies residues 211 to 244 (IKRTSDRRPDLLEKWQQEKKPGSREQGSREQGEK).

Belongs to the RNA methyltransferase TrmD family. Homodimer.

It localises to the cytoplasm. The catalysed reaction is guanosine(37) in tRNA + S-adenosyl-L-methionine = N(1)-methylguanosine(37) in tRNA + S-adenosyl-L-homocysteine + H(+). In terms of biological role, specifically methylates guanosine-37 in various tRNAs. This Trichormus variabilis (strain ATCC 29413 / PCC 7937) (Anabaena variabilis) protein is tRNA (guanine-N(1)-)-methyltransferase.